A 275-amino-acid chain; its full sequence is Large ribosomal subunit protein uL2 (275 aa).

Disordered stretches follow at residues Lys-28–Arg-48 and Val-223–Lys-275.

This sequence belongs to the universal ribosomal protein uL2 family. In terms of assembly, part of the 50S ribosomal subunit. Forms a bridge to the 30S subunit in the 70S ribosome.

In terms of biological role, one of the primary rRNA binding proteins. Required for association of the 30S and 50S subunits to form the 70S ribosome, for tRNA binding and peptide bond formation. It has been suggested to have peptidyltransferase activity; this is somewhat controversial. Makes several contacts with the 16S rRNA in the 70S ribosome. In Photobacterium profundum (strain SS9), this protein is Large ribosomal subunit protein uL2.